The following is a 295-amino-acid chain: Protoheme IX farnesyltransferase (295 aa).

The next 9 membrane-spanning stretches (helical) occupy residues 27–47 (IMYL…GNIH), 48–68 (PFIG…AGAI), 93–115 (IARS…VMMI), 119–136 (YLSG…SLVY), 147–167 (NIVI…TSVT), 175–195 (LILF…LSLL), 219–239 (IYIL…GIFL), 247–267 (TCAI…FVSI), and 275–295 (MFTY…ISSF).

The protein belongs to the UbiA prenyltransferase family. Protoheme IX farnesyltransferase subfamily.

Its subcellular location is the cell inner membrane. It carries out the reaction heme b + (2E,6E)-farnesyl diphosphate + H2O = Fe(II)-heme o + diphosphate. The protein operates within porphyrin-containing compound metabolism; heme O biosynthesis; heme O from protoheme: step 1/1. Functionally, converts heme B (protoheme IX) to heme O by substitution of the vinyl group on carbon 2 of heme B porphyrin ring with a hydroxyethyl farnesyl side group. This Ehrlichia chaffeensis (strain ATCC CRL-10679 / Arkansas) protein is Protoheme IX farnesyltransferase.